A 450-amino-acid polypeptide reads, in one-letter code: Signal recognition particle 54 kDa protein (450 aa).

Residues 107–114 (GIQGSGKT), 188–192 (DTAGR), and 247–250 (TKLD) each bind GTP.

This sequence belongs to the GTP-binding SRP family. SRP54 subfamily. Part of the signal recognition particle protein translocation system, which is composed of SRP and FtsY. Archaeal SRP consists of a 7S RNA molecule of 300 nucleotides and two protein subunits: SRP54 and SRP19.

Its subcellular location is the cytoplasm. It carries out the reaction GTP + H2O = GDP + phosphate + H(+). Functionally, involved in targeting and insertion of nascent membrane proteins into the cytoplasmic membrane. Binds to the hydrophobic signal sequence of the ribosome-nascent chain (RNC) as it emerges from the ribosomes. The SRP-RNC complex is then targeted to the cytoplasmic membrane where it interacts with the SRP receptor FtsY. The chain is Signal recognition particle 54 kDa protein from Methanococcus vannielii (strain ATCC 35089 / DSM 1224 / JCM 13029 / OCM 148 / SB).